The chain runs to 113 residues: Mitochondrial import inner membrane translocase subunit PAM16 like 1 (113 aa).

Residues 1–48 (MAARVLASVIVMGSGIIARACTQAYRQALANASKTGVAHEATQTIKRG) constitute a mitochondrion transit peptide. Residues 55-104 (EARQILGVTEKSSWDEILKKYDTLFERNAQNGSFYLQSKVHRAKECLETA) form a J-like region.

The protein belongs to the TIM16/PAM16 family. In terms of tissue distribution, expressed at low levels in seedlings, rosettes and inflorescence.

Its subcellular location is the mitochondrion inner membrane. Functionally, regulates ATP-dependent protein translocation into the mitochondrial matrix. The sequence is that of Mitochondrial import inner membrane translocase subunit PAM16 like 1 from Arabidopsis thaliana (Mouse-ear cress).